The following is a 297-amino-acid chain: Probable tyrosine phosphatase protein J2 (297 aa).

In terms of domain architecture, Tyrosine-protein phosphatase spans Asp21–Tyr286. The active-site Phosphocysteine intermediate is the Cys227.

Belongs to the protein-tyrosine phosphatase family.

It carries out the reaction O-phospho-L-tyrosyl-[protein] + H2O = L-tyrosyl-[protein] + phosphate. In Microplitis demolitor (Parasitoid wasp), this protein is Probable tyrosine phosphatase protein J2 (J3).